We begin with the raw amino-acid sequence, 355 residues long: MSGKTRRLMVMAGGTGGHVFPGLAVAHHLKDQGWDVLWLGTADRMEADLVPKHGIDIEFIQISGLRGKGIKALLAAPVRIFKAIRQAKAIMRRYQPDVVLGMGGYVSGPGGIAAWMCGVPVVLHEQNGIAGLTNRWLAKIATTVLQAFPGAFPKAPVVGNPVREDVLALPIPEQRLTGREGPIRVLVVGGSQGARILNQAMPEIAARMGDKITLWHQTGKGAKESVQNAYDNSVKCEHKITEFIDDMAQAYAWADVVICRSGALTVSEVSAAGLPGIFVPFQHKDRQQYWNALPLEKVGAAKILEQPQFTVDAVIELLTQWQRPQLLEMAEKARSAAIVDATEQVSAALIDAAKK.

UDP-N-acetyl-alpha-D-glucosamine is bound by residues 15 to 17 (TGG), N127, R163, S191, I244, 263 to 268 (ALTVSE), and Q288.

It belongs to the glycosyltransferase 28 family. MurG subfamily.

Its subcellular location is the cell inner membrane. It carries out the reaction di-trans,octa-cis-undecaprenyl diphospho-N-acetyl-alpha-D-muramoyl-L-alanyl-D-glutamyl-meso-2,6-diaminopimeloyl-D-alanyl-D-alanine + UDP-N-acetyl-alpha-D-glucosamine = di-trans,octa-cis-undecaprenyl diphospho-[N-acetyl-alpha-D-glucosaminyl-(1-&gt;4)]-N-acetyl-alpha-D-muramoyl-L-alanyl-D-glutamyl-meso-2,6-diaminopimeloyl-D-alanyl-D-alanine + UDP + H(+). It participates in cell wall biogenesis; peptidoglycan biosynthesis. Its function is as follows. Cell wall formation. Catalyzes the transfer of a GlcNAc subunit on undecaprenyl-pyrophosphoryl-MurNAc-pentapeptide (lipid intermediate I) to form undecaprenyl-pyrophosphoryl-MurNAc-(pentapeptide)GlcNAc (lipid intermediate II). The sequence is that of UDP-N-acetylglucosamine--N-acetylmuramyl-(pentapeptide) pyrophosphoryl-undecaprenol N-acetylglucosamine transferase from Photorhabdus laumondii subsp. laumondii (strain DSM 15139 / CIP 105565 / TT01) (Photorhabdus luminescens subsp. laumondii).